We begin with the raw amino-acid sequence, 295 residues long: Ribosome production factor 1 (295 aa).

The tract at residues 24–47 (HEKNKERHTMRRKRAKEERENPEL) is disordered. Basic and acidic residues predominate over residues 38–47 (AKEERENPEL). The Brix domain maps to 93–276 (PKIFLTTNVN…LKRLQRGIKE (184 aa)). The RNA-binding stretch occupies residues 254 to 271 (VGLQELGPQFTLKLKRLQ).

Part of a complex that includes BRX1, RPF1, RPF2 and SSF1 or SSF2.

It is found in the nucleus. Its subcellular location is the nucleolus. Functionally, essential protein. Required for biogenesis of the 60S ribosomal subunit. The sequence is that of Ribosome production factor 1 (RPF1) from Saccharomyces cerevisiae (strain ATCC 204508 / S288c) (Baker's yeast).